The chain runs to 424 residues: Histidine--tRNA ligase (424 aa).

This sequence belongs to the class-II aminoacyl-tRNA synthetase family. In terms of assembly, homodimer.

The protein localises to the cytoplasm. The enzyme catalyses tRNA(His) + L-histidine + ATP = L-histidyl-tRNA(His) + AMP + diphosphate + H(+). The chain is Histidine--tRNA ligase from Salmonella typhi.